A 189-amino-acid chain; its full sequence is MAQNGSEGPLLAGVAGRYALALYELAHDQGQVDDVAKNLDAFDALYRESDDLRRLVRSPAYSAAEQTAAVGALLDRAGISGLAANFIKLTADNRRLFALPGMIRAYREKVRESKGIIRAEVRVAEKPSDAVIEDIKASLRDVAKSEIDLDLHIDPSLIGGIVVKMGSRMVDASLRTKLNSIRLAMREAR.

The protein belongs to the ATPase delta chain family. As to quaternary structure, F-type ATPases have 2 components, F(1) - the catalytic core - and F(0) - the membrane proton channel. F(1) has five subunits: alpha(3), beta(3), gamma(1), delta(1), epsilon(1). F(0) has three main subunits: a(1), b(2) and c(10-14). The alpha and beta chains form an alternating ring which encloses part of the gamma chain. F(1) is attached to F(0) by a central stalk formed by the gamma and epsilon chains, while a peripheral stalk is formed by the delta and b chains.

It localises to the cell inner membrane. In terms of biological role, f(1)F(0) ATP synthase produces ATP from ADP in the presence of a proton or sodium gradient. F-type ATPases consist of two structural domains, F(1) containing the extramembraneous catalytic core and F(0) containing the membrane proton channel, linked together by a central stalk and a peripheral stalk. During catalysis, ATP synthesis in the catalytic domain of F(1) is coupled via a rotary mechanism of the central stalk subunits to proton translocation. This protein is part of the stalk that links CF(0) to CF(1). It either transmits conformational changes from CF(0) to CF(1) or is implicated in proton conduction. The sequence is that of ATP synthase subunit delta from Methylorubrum extorquens (strain PA1) (Methylobacterium extorquens).